A 196-amino-acid polypeptide reads, in one-letter code: MSFAEKITGLLARPNQDPAGGPEAPWYLKYGSRVLGIVAAFFAILFGLWNVLSIIGLSVSCLVAGIIQMLAGFVVMALEAPCCFVCIEQVGSVADKVDAKPMYFRAGLYCAMAVPPIFMCFGLASLFGSGLIFATGAVYGMMALGKKASATDMRAAAQQSGYGGNATTSTTNDRAGIVNNAQPFSFTGAVGTDSNV.

The next 3 membrane-spanning stretches (helical) occupy residues Leu-35–Ile-55, Leu-70–Ser-92, and Ala-113–Phe-133.

It belongs to the calcium channel flower family. Homomultimer. Associates with the dally/ magu complex.

Its subcellular location is the cell membrane. It is found in the cytoplasmic vesicle. The protein localises to the secretory vesicle. The protein resides in the synaptic vesicle membrane. It localises to the presynaptic cell membrane. Its subcellular location is the endosome. Its activity is regulated as follows. Channel activity is inhibited by La(3+), which reduces Ca(2+) influx and thus inhibits it's function in promoting activity-dependent bulk endocytosis (ADBE) in response to high stimuli. Its function is as follows. Transmembrane protein which mediates synaptic endocytosis, fitness-based cell culling, neuronal culling, morphogen gradient scaling, and calcium transport. Regulates synaptic endocytosis and hence couples exo- with endocytosis. Controls two major modes of synaptic vesicle (SV) endocytosis in the synaptic boutons of neuromuscular junctions (NMJs); Ca(2+) channel-independent Clathrin-mediated endocytosis (CME) in response to mild stimulation, and Ca(2+) channel-dependent activity-dependent bulk endocytosis (ADBE) in response to strong stimulation. Functions in ADBE and subsequent SV reformation from bulk endosomes by initiating Ca(2+) channel-dependent phosphatidylinositol 4,5-bisphosphate (PtdIns(4,5)P2) compartmentalization in synaptic boutons. There it acts at the periactive zone to provide the low Ca(2+) levels required to initiate Calcineurin activation and upregulate PtdIns(4,5)P2. Conversely PtdIns(4,5)P2 enhances fwe Ca(2+) channel-activity, establishing a positive feedback loop that induces PtdIns(4,5)P2 microdomain at the periactive zone. These microdomains trigger bulk membrane invagination (i.e. ADBE) by triggering actin polymerization while also promoting localization of fwe to bulk endosomes, thereby removing the ADBE trigger to reduce endocytosis and prevent excess membrane uptake. PtdIns(4,5)P2 then promotes SV reformation from the bulk endosomes, to coordinate ADBE and subsequent SV reformation. Different combinations of the flower isoforms at the cell membrane are also required for the identification and elimination of suboptimal or supernumerary cells during development, regeneration, and adulthood. Required for the recognition and elimination of unfit cells in the developing wing during cell competition. In the developing pupal retina, mediates the elimination of unwanted postmitotic neurons, including supernumerary photoreceptor neurons that form at the periphery of the retina and are contained within incomplete ommatidia units. Also required for efficient elimination and replacement of old neurons by newly generated neurons during regeneration in the adult brain following mechanical injury. Downstream of the flower fitness fingerprints, cells identified as unwanted or unfit are eliminated via apoptosis through the expression of ahuizotl (azot). However, the cells marked for elimination by the flower isoforms only undergo apoptosis if additional thresholds are met; (1) their neighboring fit/healthy cells express different levels of the fwe isoforms, and (2) the levels of the protective signal SPARC expressed by the loser or unwanted cells are unable to inhibit caspase activation. These additional thresholds for flower-mediated apoptosis, allows useful cells to recover from transient and limited stress before they are unnecessarily eliminated. Functions with dally and magu in a mechanism of scaling, which utilises apoptosis to ensure that the dpp morphogen gradient, which mediates organ growth, remains proportional to the size of the growing wing. In this mechanism, fwe represses dally- and Magu-dependent activity in expanding the gradient, and dally/Magu inhibits fwe-dependent apoptosis to keep cell death rate low. When the levels of these different proteins are optimally regulated the gradient correctly scales with organ growth but when this fails, fwe-mediated apoptosis is activated to trim the developing tissue to match the correct size of the gradient. The chain is Calcium channel flower from Drosophila grimshawi (Hawaiian fruit fly).